The primary structure comprises 461 residues: Adenine DNA glycosylase (461 aa).

Residue glutamate 69 is the Proton donor/acceptor of the active site. [4Fe-4S] cluster-binding residues include cysteine 226, cysteine 233, cysteine 236, and cysteine 242. Residues 296–437 (QREERALVVI…RAALEIKKRK (142 aa)) form the Nudix hydrolase domain. A Nudix box motif is present at residues 340–366 (FGQESWPKDMDAEFQKSIAQWISNDSR).

The protein belongs to the Nth/MutY family. Monomer. Requires [4Fe-4S] cluster as cofactor.

It catalyses the reaction Hydrolyzes free adenine bases from 7,8-dihydro-8-oxoguanine:adenine mismatched double-stranded DNA, leaving an apurinic site.. Adenine glycosylase active on G-A mispairs. Has glycosylase and nicking activities and is active at A/G and A/GO sites. In Schizosaccharomyces pombe (strain 972 / ATCC 24843) (Fission yeast), this protein is Adenine DNA glycosylase (myh1).